The following is a 122-amino-acid chain: Small ribosomal subunit protein uS13 (122 aa).

The disordered stretch occupies residues 93-122 (RLSLPVRGQRTKTNSRTRKGKRKTVAGKKK). Residues 101-122 (QRTKTNSRTRKGKRKTVAGKKK) show a composition bias toward basic residues.

This sequence belongs to the universal ribosomal protein uS13 family. Part of the 30S ribosomal subunit. Forms a loose heterodimer with protein S19. Forms two bridges to the 50S subunit in the 70S ribosome.

In terms of biological role, located at the top of the head of the 30S subunit, it contacts several helices of the 16S rRNA. In the 70S ribosome it contacts the 23S rRNA (bridge B1a) and protein L5 of the 50S subunit (bridge B1b), connecting the 2 subunits; these bridges are implicated in subunit movement. Contacts the tRNAs in the A and P-sites. The chain is Small ribosomal subunit protein uS13 from Chlamydia pneumoniae (Chlamydophila pneumoniae).